The chain runs to 61 residues: Potassium channel toxin alpha-KTx 18.1 (61 aa).

The N-terminal stretch at 1–24 is a signal peptide; sequence MRFTGIILILISMTLIDSFFEMKV. 3 disulfides stabilise this stretch: Cys-33-Cys-52, Cys-38-Cys-57, and Cys-42-Cys-59.

In terms of tissue distribution, expressed by the venom gland.

Its subcellular location is the secreted. In terms of biological role, reversible blocker of both Kv1.3/KCNA3 potassium channels (high affinity) and Shaker B (mammalian Kv1.1 analog) potassium channels (very low affinity). The sequence is that of Potassium channel toxin alpha-KTx 18.1 from Tityus obscurus (Amazonian scorpion).